Here is a 411-residue protein sequence, read N- to C-terminus: Phospholipase ABHD3 (411 aa).

Residues 25–45 (VGFFGSGVGLSLILGFSVAYA) traverse the membrane as a helical; Signal-anchor for type II membrane protein segment. The 94-residue stretch at 140 to 233 (PTILLLPGLT…MLLLNYLGKI (94 aa)) folds into the AB hydrolase-1 domain. Residues S220, D346, and H375 each act as charge relay system in the active site.

It belongs to the AB hydrolase superfamily. AB hydrolase 4 family. As to expression, widely expressed with higher expression in liver.

It localises to the membrane. The enzyme catalyses a 1,2-diacyl-sn-glycero-3-phosphocholine + H2O = a 1-acyl-sn-glycero-3-phosphocholine + a fatty acid + H(+). The catalysed reaction is a 1,2-diacyl-sn-glycero-3-phosphocholine + H2O = a 2-acyl-sn-glycero-3-phosphocholine + a fatty acid + H(+). It carries out the reaction 1-tetradecanoyl-2-(9Z,12Z-octadecadienoyl)-sn-glycero-3-phosphocholine + H2O = 2-(9Z,12Z-octadecadienoyl)-sn-glycero-3-phosphocholine + tetradecanoate + H(+). It catalyses the reaction 1-tetradecanoyl-2-(9Z,12Z-octadecadienoyl)-sn-glycero-3-phosphocholine + H2O = 1-tetradecanoyl-sn-glycero-3-phosphocholine + (9Z,12Z)-octadecadienoate + H(+). The enzyme catalyses 1-tetradecanoyl-2-(5Z,8Z,11Z,14Z-eicosatetraenoyl)-sn-glycero-3-phosphocholine + H2O = 2-(5Z,8Z,11Z,14Z)-eicosatetraenoyl-sn-glycero-3-phosphocholine + tetradecanoate + H(+). The catalysed reaction is 1-tetradecanoyl-2-(4Z,7Z,10Z,13Z,16Z,19Z-docosahexaenoyl)-sn-glycero-3-phosphocholine + H2O = 2-(4Z,7Z,10Z,13Z,16Z,19Z-docosahexaenoyl)-sn-glycero-3-phosphocholine + tetradecanoate + H(+). It carries out the reaction 1,2-ditetradecanoyl-sn-glycero-3-phosphocholine + H2O = 2-tetradecanoyl-sn-glycero-3-phosphocholine + tetradecanoate + H(+). It catalyses the reaction 1-octadecanoyl-2-acetyl-sn-glycero-3-phosphocholine + H2O = 1-octadecanoyl-sn-glycero-3-phosphocholine + acetate + H(+). The enzyme catalyses 1,2-ditetradecanoyl-sn-glycero-3-phosphocholine + H2O = 1-tetradecanoyl-sn-glycero-3-phosphocholine + tetradecanoate + H(+). The catalysed reaction is 1-octadecanoyl-2-pentanoyl-sn-glycero-3-phosphocholine + H2O = pentanoate + 1-octadecanoyl-sn-glycero-3-phosphocholine + H(+). It carries out the reaction 1-octadecanoyl-2-hexanoyl-sn-glycero-3-phosphocholine + H2O = hexanoate + 1-octadecanoyl-sn-glycero-3-phosphocholine + H(+). It catalyses the reaction 1-octadecanoyl-2-octanoyl-sn-glycero-3-phosphocholine + H2O = 1-octadecanoyl-sn-glycero-3-phosphocholine + octanoate + H(+). The enzyme catalyses 1-octadecanoyl-2-nonanoyl-sn-glycero-3-phosphocholine + H2O = nonanoate + 1-octadecanoyl-sn-glycero-3-phosphocholine + H(+). The catalysed reaction is 1-O-hexadecyl-2-nonadioyl-sn-glycero-3-phosphocholine + H2O = nonanedioate + 1-O-hexadecyl-sn-glycero-3-phosphocholine + H(+). It carries out the reaction 1-hexadecanoyl-2-nonadioyl-sn-glycero-3-phosphocholine + H2O = nonanedioate + 1-hexadecanoyl-sn-glycero-3-phosphocholine + H(+). It catalyses the reaction 1-hexadecanoyl-2-(9-oxononanoyl)-sn-glycero-3-phosphocholine + H2O = 9-oxononanoate + 1-hexadecanoyl-sn-glycero-3-phosphocholine + H(+). The enzyme catalyses 1-hexadecanoyl-2-(5-oxopentanoyl)-sn-glycero-3-phosphocholine + H2O = 5-oxopentanoate + 1-hexadecanoyl-sn-glycero-3-phosphocholine + H(+). The catalysed reaction is 1-hexadecanoyl-2-glutaroyl-sn-glycero-3-phosphocholine + H2O = glutarate + 1-hexadecanoyl-sn-glycero-3-phosphocholine + H(+). It carries out the reaction 1-O-hexadecyl-2-acetyl-sn-glycero-3-phosphocholine + H2O = 1-O-hexadecyl-sn-glycero-3-phosphocholine + acetate + H(+). Functionally, phospholipase that may play a role in phospholipids remodeling. May selectively cleave myristate (C14)-containing phosphatidylcholines through its predominant phospholipase 1 activity, cleaving preferentially acyl groups in sn1 position. In parallel, may have a minor phospholipase 2 activity acting on acyl groups in position sn2. In addition to (C14)-containing phosphatidylcholines, may also act on other medium-chain-containing and oxidatively truncated phospholipids. The protein is Phospholipase ABHD3 of Mus musculus (Mouse).